Reading from the N-terminus, the 137-residue chain is Protein BNS1 (137 aa).

In terms of biological role, component of the FEAR (CDC14 early anaphase release) network which promotes CDC14 release from the nucleolus during early anaphase and is required for the efficient segregation of telomeric and nucleolar regions. Although BNS1 can partially compensate for a lack of SPO12 function when overexpressed, it does not appear to play any role in controlling meiotic nuclear division. The polypeptide is Protein BNS1 (BNS1) (Saccharomyces cerevisiae (strain ATCC 204508 / S288c) (Baker's yeast)).